Consider the following 177-residue polypeptide: Peptide methionine sulfoxide reductase MsrA 2 (177 aa).

The active site involves Cys-12.

Belongs to the MsrA Met sulfoxide reductase family.

It carries out the reaction L-methionyl-[protein] + [thioredoxin]-disulfide + H2O = L-methionyl-(S)-S-oxide-[protein] + [thioredoxin]-dithiol. It catalyses the reaction [thioredoxin]-disulfide + L-methionine + H2O = L-methionine (S)-S-oxide + [thioredoxin]-dithiol. In terms of biological role, has an important function as a repair enzyme for proteins that have been inactivated by oxidation. Catalyzes the reversible oxidation-reduction of methionine sulfoxide in proteins to methionine. This Staphylococcus aureus (strain MRSA252) protein is Peptide methionine sulfoxide reductase MsrA 2.